Consider the following 472-residue polypeptide: ATP synthase subunit beta (472 aa).

Position 160 to 167 (160 to 167 (GGAGVGKT)) interacts with ATP.

It belongs to the ATPase alpha/beta chains family. In terms of assembly, F-type ATPases have 2 components, CF(1) - the catalytic core - and CF(0) - the membrane proton channel. CF(1) has five subunits: alpha(3), beta(3), gamma(1), delta(1), epsilon(1). CF(0) has three main subunits: a(1), b(2) and c(9-12). The alpha and beta chains form an alternating ring which encloses part of the gamma chain. CF(1) is attached to CF(0) by a central stalk formed by the gamma and epsilon chains, while a peripheral stalk is formed by the delta and b chains.

Its subcellular location is the cell membrane. The enzyme catalyses ATP + H2O + 4 H(+)(in) = ADP + phosphate + 5 H(+)(out). Its function is as follows. Produces ATP from ADP in the presence of a proton gradient across the membrane. The catalytic sites are hosted primarily by the beta subunits. The protein is ATP synthase subunit beta of Lachnoclostridium phytofermentans (strain ATCC 700394 / DSM 18823 / ISDg) (Clostridium phytofermentans).